The chain runs to 382 residues: Probable inactive dehydrogenase easA (382 aa).

Residues 25–27 (PMT), Ala-60, Gln-102, and His-171 contribute to the FMN site. Residues His-171 and Asn-174 each coordinate substrate. Residues Lys-223, Gly-299, 324-325 (GR), and Arg-325 contribute to the FMN site. Tyr-352 is a substrate binding site.

The protein belongs to the NADH:flavin oxidoreductase/NADH oxidase family.

Functionally, probable inactive dehydrogenase; part of the gene cluster that mediates the biosynthesis of fungal ergot alkaloid. DmaW catalyzes the first step of ergot alkaloid biosynthesis by condensing dimethylallyl diphosphate (DMAP) and tryptophan to form 4-dimethylallyl-L-tryptophan. The second step is catalyzed by the methyltransferase easF that methylates 4-dimethylallyl-L-tryptophan in the presence of S-adenosyl-L-methionine, resulting in the formation of 4-dimethylallyl-L-abrine. The catalase easC and the FAD-dependent oxidoreductase easE then transform 4-dimethylallyl-L-abrine to chanoclavine-I which is further oxidized by easD in the presence of NAD(+), resulting in the formation of chanoclavine-I aldehyde. Agroclavine dehydrogenase easG then mediates the conversion of chanoclavine-I aldehyde to agroclavine via a non-enzymatic adduct reaction: the substrate is an iminium intermediate that is formed spontaneously from chanoclavine-I aldehyde in the presence of glutathione. Further conversion of agroclavine to paspalic acid is a two-step process involving oxidation of agroclavine to elymoclavine and of elymoclavine to paspalic acid, the second step being performed by the elymoclavine oxidase cloA. However, cloA does not encode a functional enzyme indicating that C.fusiformis terminates its ergot alkaloid pathway at elymoclavine. The protein is Probable inactive dehydrogenase easA of Claviceps fusiformis (Ergot fungus).